A 1187-amino-acid polypeptide reads, in one-letter code: DNA-directed RNA polymerase subunit beta (1187 aa).

Residues 1150 to 1187 form a disordered region; the sequence is KDEDDDPASSADDLGFNIGARPDAAAKEDQKAEEPEYQ. Positions 1173 to 1187 are enriched in basic and acidic residues; the sequence is AAAKEDQKAEEPEYQ.

Belongs to the RNA polymerase beta chain family. In terms of assembly, the RNAP catalytic core consists of 2 alpha, 1 beta, 1 beta' and 1 omega subunit. When a sigma factor is associated with the core the holoenzyme is formed, which can initiate transcription.

The catalysed reaction is RNA(n) + a ribonucleoside 5'-triphosphate = RNA(n+1) + diphosphate. Its function is as follows. DNA-dependent RNA polymerase catalyzes the transcription of DNA into RNA using the four ribonucleoside triphosphates as substrates. This Bifidobacterium longum subsp. infantis (strain ATCC 15697 / DSM 20088 / JCM 1222 / NCTC 11817 / S12) protein is DNA-directed RNA polymerase subunit beta.